Reading from the N-terminus, the 452-residue chain is Phosphoglucosamine mutase (452 aa).

Catalysis depends on S108, which acts as the Phosphoserine intermediate. The Mg(2+) site is built by S108, D247, D249, and D251. The residue at position 108 (S108) is a Phosphoserine.

It belongs to the phosphohexose mutase family. The cofactor is Mg(2+). Post-translationally, activated by phosphorylation.

The enzyme catalyses alpha-D-glucosamine 1-phosphate = D-glucosamine 6-phosphate. Catalyzes the conversion of glucosamine-6-phosphate to glucosamine-1-phosphate. The chain is Phosphoglucosamine mutase from Paraburkholderia phymatum (strain DSM 17167 / CIP 108236 / LMG 21445 / STM815) (Burkholderia phymatum).